A 164-amino-acid polypeptide reads, in one-letter code: Translocator protein homolog (164 aa).

Helical transmembrane passes span 16 to 34 (WSAS…NSYK), 52 to 72 (SAFG…SHLA), 89 to 106 (ILYI…PLFY), 112 to 132 (KLAL…AKTW), and 141 to 163 (KWLI…YCLL).

This sequence belongs to the TspO/BZRP family.

Its subcellular location is the mitochondrion membrane. May play a role in the transport of porphyrins and heme. In Schizosaccharomyces pombe (strain 972 / ATCC 24843) (Fission yeast), this protein is Translocator protein homolog.